Consider the following 880-residue polypeptide: Translation initiation factor IF-2 (880 aa).

Composition is skewed to basic and acidic residues over residues 180–194 (QEAATKRKQDEEAAK) and 202–228 (LAEEHSKRWAEEERQRLEAEKNGDHHI). The tract at residues 180–289 (QEAATKRKQD…APESMAHGFN (110 aa)) is disordered. Residues 249 to 262 (GRRARNKSNAKKRG) are compositionally biased toward basic residues. The tr-type G domain occupies 380 to 549 (SRAPVVTIMG…LLQAEVLELK (170 aa)). Positions 389 to 396 (GHVDHGKT) are G1. Residue 389–396 (GHVDHGKT) coordinates GTP. Residues 414–418 (GITQH) are G2. A G3 region spans residues 435-438 (DTPG). Residues 435 to 439 (DTPGH) and 489 to 492 (NKMD) each bind GTP. Residues 489–492 (NKMD) form a G4 region. Residues 525 to 527 (SAK) form a G5 region.

Belongs to the TRAFAC class translation factor GTPase superfamily. Classic translation factor GTPase family. IF-2 subfamily.

The protein localises to the cytoplasm. One of the essential components for the initiation of protein synthesis. Protects formylmethionyl-tRNA from spontaneous hydrolysis and promotes its binding to the 30S ribosomal subunits. Also involved in the hydrolysis of GTP during the formation of the 70S ribosomal complex. The protein is Translation initiation factor IF-2 of Shewanella baltica (strain OS223).